We begin with the raw amino-acid sequence, 323 residues long: Aquaporin NIP3-1 (323 aa).

Residue methionine 1 is modified to N-acetylmethionine. 2 consecutive transmembrane segments (helical) span residues 45–65 (LIGEFVGTFTMIFAGCSAIVV) and 73–93 (VTLPGIALVWGLVVTVMIYSI). The short motif at 102–104 (NPA) is the NPA 1 element. 3 helical membrane passes run 122–142 (GYIAAQLLGSTLAAAVLRLVF), 167–187 (TSFVMEFIATFNLMFVISAVA), and 196–216 (FAGIAIGATIVLDILFSGPIS). The NPA 2 motif lies at 221–223 (NPA). Residues 239 to 259 (WLYIVSPVIGALSGAWTYGLL) traverse the membrane as a helical segment.

It belongs to the MIP/aquaporin (TC 1.A.8) family. NIP (TC 1.A.8.12) subfamily.

Its subcellular location is the membrane. Functionally, aquaporins facilitate the transport of water and small neutral solutes across cell membranes. The protein is Aquaporin NIP3-1 (NIP3-1) of Arabidopsis thaliana (Mouse-ear cress).